The chain runs to 214 residues: Cytochrome c biogenesis ATP-binding export protein CcmA (214 aa).

Positions Leu-8–Val-212 constitute an ABC transporter domain. An ATP-binding site is contributed by Gly-40 to Thr-47.

This sequence belongs to the ABC transporter superfamily. CcmA exporter (TC 3.A.1.107) family. In terms of assembly, the complex is composed of two ATP-binding proteins (CcmA) and two transmembrane proteins (CcmB).

The protein resides in the cell inner membrane. The catalysed reaction is heme b(in) + ATP + H2O = heme b(out) + ADP + phosphate + H(+). Its function is as follows. Part of the ABC transporter complex CcmAB involved in the biogenesis of c-type cytochromes; once thought to export heme, this seems not to be the case, but its exact role is uncertain. Responsible for energy coupling to the transport system. In Aromatoleum aromaticum (strain DSM 19018 / LMG 30748 / EbN1) (Azoarcus sp. (strain EbN1)), this protein is Cytochrome c biogenesis ATP-binding export protein CcmA.